The primary structure comprises 64 residues: Large ribosomal subunit protein bL35 (64 aa).

It belongs to the bacterial ribosomal protein bL35 family.

The sequence is that of Large ribosomal subunit protein bL35 from Streptomyces coelicolor (strain ATCC BAA-471 / A3(2) / M145).